Consider the following 735-residue polypeptide: MWRVLFLLSGLGGLRMDSNFDSLPVQITVPEKIRSIIKEGIESQASYKIVIEGKPYTVNLMQKNFLPHNFRVYSYSGTGIMKPLDQDFQNFCHYQGYIEGYPKSVVMVSTCTGLRGVLQFENVSYGIEPLESSVGFEHVIYQVKHKKADVSLYNEKDIESRDLSFKLQSVEPQQDFAKYIEMHVIVEKQLYNHMGSDTTVVAQKVFQLIGLTNAIFVSFNITIILSSLELWIDENKIATTGEANELLHTFLRWKTSYLVLRPHDVAFLLVYREKSNYVGATFQGKMCDANYAGGVVLHPRTISLESLAVILAQLLSLSMGITYDDINKCQCSGAVCIMNPEAIHFSGVKIFSNCSFEDFAHFISKQKSQCLHNQPRLDPFFKQQAVCGNAKLEAGEECDCGTEQDCALIGETCCDIATCRFKAGSNCAEGPCCENCLFMSKERMCRPSFEECDLPEYCNGSSASCPENHYVQTGHPCGLNQWICIDGVCMSGDKQCTDTFGKEVEFGPSECYSHLNSKTDVSGNCGISDSGYTQCEADNLQCGKLICKYVGKFLLQIPRATIIYANISGHLCIAVEFASDHADSQKMWIKDGTSCGSNKVCRNQRCVSSSYLGYDCTTDKCNDRGVCNNKKHCHCSASYLPPDCSVQSDLWPGGSIDSGNFPPVAIPARLPERRYIENIYHSKPMRWPFFLFIPFFIIFCVLIAIMVKVNFQRKKWRTEDYSSDEQPESESEPKG.

The N-terminal stretch at M1–M16 is a signal peptide. A propeptide spanning residues D17–Q174 is cleaved from the precursor. 2 N-linked (GlcNAc...) asparagine glycosylation sites follow: N122 and N220. The Extracellular portion of the chain corresponds to D175–R686. The Peptidase M12B domain maps to K178–P375. Intrachain disulfides connect C287-C370, C329-C354, C331-C336, and C445-C465. N-linked (GlcNAc...) asparagine glycosylation is found at N353, N459, and N566. The Disintegrin domain maps to Q384 to T473. The 34-residue stretch at L612–S645 folds into the EGF-like domain. Intrachain disulfides connect C616–C627, C621–C633, and C635–C644. A helical membrane pass occupies residues W687 to V707. Residues K708–G735 lie on the Cytoplasmic side of the membrane. S729 is subject to Phosphoserine.

Post-translationally, the prodomain and the metalloprotease domain are cleaved during the epididymal maturation of the spermatozoa. As to expression, expressed specifically in spermatogenic cells in the seminiferous cells. Not detected in fetal tissues.

The protein localises to the membrane. In terms of biological role, sperm surface membrane protein that may be involved in sperm-egg plasma membrane adhesion and fusion during fertilization. Could have a direct role in sperm-zona binding or migration of sperm from the uterus into the oviduct. Interactions with egg membrane could be mediated via binding between its disintegrin-like domain to one or more integrins receptors on the egg. This is a non catalytic metalloprotease-like protein. This Homo sapiens (Human) protein is Disintegrin and metalloproteinase domain-containing protein 2 (ADAM2).